The primary structure comprises 135 residues: Fatty acid-binding protein homolog 6 (135 aa).

Residues Arg110 and 130–132 contribute to the a fatty acid site; that span reads REY.

Belongs to the calycin superfamily. Fatty-acid binding protein (FABP) family.

The chain is Fatty acid-binding protein homolog 6 (lbp-6) from Caenorhabditis elegans.